Here is a 146-residue protein sequence, read N- to C-terminus: Aminoglycoside N(6')-acetyltransferase type 1 (146 aa).

One can recognise an N-acetyltransferase domain in the interval 1 to 146; sequence MNIMPVSESL…RVVYFKKHIG (146 aa). The substrate site is built by Trp-22, His-25, Tyr-66, and Glu-79. Acetyl-CoA is bound at residue 81–83; the sequence is IYV. Asp-115 is a binding site for substrate. Asn-120 contributes to the acetyl-CoA binding site. Glu-136 lines the substrate pocket.

Homodimer.

It catalyses the reaction kanamycin B + acetyl-CoA = N(6')-acetylkanamycin B + CoA + H(+). Functionally, catalyzes the transfer of an acetyl group from acetyl-CoA to the 6'-amino group of aminoglycoside molecules conferring resistance to antibiotics containing the purpurosamine ring including amikacin, kanamycin, tobramycin and netilmicin. This chain is Aminoglycoside N(6')-acetyltransferase type 1, found in Acinetobacter genomosp. 13.